A 77-amino-acid chain; its full sequence is Translation initiation factor IF-1, chloroplastic (77 aa).

The S1-like domain occupies 1–71 (MKEQKWTHEG…TRGRIIYRLR (71 aa)).

Belongs to the IF-1 family. As to quaternary structure, component of the 30S ribosomal translation pre-initiation complex which assembles on the 30S ribosome in the order IF-2 and IF-3, IF-1 and N-formylmethionyl-tRNA(fMet); mRNA recruitment can occur at any time during PIC assembly.

The protein localises to the plastid. It localises to the chloroplast. Functionally, one of the essential components for the initiation of protein synthesis. Stabilizes the binding of IF-2 and IF-3 on the 30S subunit to which N-formylmethionyl-tRNA(fMet) subsequently binds. Helps modulate mRNA selection, yielding the 30S pre-initiation complex (PIC). Upon addition of the 50S ribosomal subunit IF-1, IF-2 and IF-3 are released leaving the mature 70S translation initiation complex. The sequence is that of Translation initiation factor IF-1, chloroplastic from Coffea arabica (Arabian coffee).